Reading from the N-terminus, the 65-residue chain is Large ribosomal subunit protein bL35 (65 aa).

It belongs to the bacterial ribosomal protein bL35 family.

This Chlorobium phaeovibrioides (strain DSM 265 / 1930) (Prosthecochloris vibrioformis (strain DSM 265)) protein is Large ribosomal subunit protein bL35.